Here is a 1312-residue protein sequence, read N- to C-terminus: Probable histone-lysine N-methyltransferase lin-59 (1312 aa).

Polar residues-rich tracts occupy residues 1–11 (MHGAGEQQQRY) and 25–36 (STSSHQYQQQGA). 5 disordered regions span residues 1-41 (MHGA…QMHQ), 54-81 (TTTS…RQQG), 154-223 (QPSG…KPVD), 312-435 (EESK…PPPV), and 524-556 (KDNI…EPSE). Low complexity predominate over residues 54–68 (TTTSAAASTSSSGGS). Residues 69 to 78 (NSSGGSGGHR) show a composition bias toward gly residues. The segment covering 160-176 (PMSSNAPATTSSATPDS) has biased composition (low complexity). Residues 200–210 (DHDDEEDDDGP) show a composition bias toward acidic residues. Basic and acidic residues predominate over residues 312–321 (EESKKKKDME). The span at 344–367 (ATRSTNSPDVTTSNLPEEPSTSTM) shows a compositional bias: polar residues. Positions 371–382 (KENEDVEKVEGK) are enriched in basic and acidic residues. Basic residues predominate over residues 383–394 (RRGRKPKKRRGF). 2 stretches are compositionally biased toward basic and acidic residues: residues 395–419 (HKES…DHLP) and 524–535 (KDNIKKEVKEES). An AWS domain is found at 590–635 (APSLTCGCTKGACTSDMDCLNRALRVQCSSDCSVPYCSNRRFWKED). The 113-residue stretch at 638-750 (NKLCVSNGPR…PNAEITVDKS (113 aa)) folds into the SET domain. The segment at 913–934 (DNAPRARALSTSCPSPVPSKRG) is disordered. The segment at 967–1027 (AVRCICGALD…EYICDFCTNK (61 aa)) adopts a PHD-type zinc-finger fold. The region spanning 1100–1223 (NKYRFPKAAT…KTQRVFEKVP (124 aa)) is the BAH domain. The tract at residues 1248 to 1295 (RDFRPYDPSNPSPKPPKTSSIPSTSSIDPPQSSSDGLPEVDTKKLSKR) is disordered. Low complexity predominate over residues 1264 to 1281 (KTSSIPSTSSIDPPQSSS).

This sequence belongs to the class V-like SAM-binding methyltransferase superfamily. Histone-lysine methyltransferase family. SET2 subfamily. Widely expressed throughout embryonic development and into adulthood.

It localises to the nucleus. The enzyme catalyses L-lysyl-[histone] + S-adenosyl-L-methionine = N(6)-methyl-L-lysyl-[histone] + S-adenosyl-L-homocysteine + H(+). Its function is as follows. Probable histone methyltransferase. Essential protein required to maintain expression of homeotic genes egl-5 and mab-5. May play an analogous role to the trithorax Group (trxG) proteins. TrxG proteins form multiprotein complexes that are required to maintain the transcriptionally active state of homeotic genes throughout development. May act via a modification of chromatin. In Caenorhabditis elegans, this protein is Probable histone-lysine N-methyltransferase lin-59 (lin-59).